The chain runs to 493 residues: Cysteine--tRNA ligase (493 aa).

Cys29 provides a ligand contact to Zn(2+). Residues 31–41 (VTVYDLCHLGH) carry the 'HIGH' region motif. Zn(2+)-binding residues include Cys213, His238, and Glu242. The 'KMSKS' region motif lies at 270 to 274 (KMSKS). Lys273 lines the ATP pocket.

It belongs to the class-I aminoacyl-tRNA synthetase family. In terms of assembly, monomer. Requires Zn(2+) as cofactor.

The protein resides in the cytoplasm. It catalyses the reaction tRNA(Cys) + L-cysteine + ATP = L-cysteinyl-tRNA(Cys) + AMP + diphosphate. The sequence is that of Cysteine--tRNA ligase from Parasynechococcus marenigrum (strain WH8102).